The following is a 645-amino-acid chain: Zinc finger and SCAN domain-containing protein 2 (645 aa).

3 disordered regions span residues 1-25, 37-75, and 193-230; these read MMAA…EEDR, DDSW…GPQG, and EMPE…HGEV. Residues 59–132 enclose the SCAN box domain; the sequence is SAGKGSPQEE…ALVEDLTQTL (74 aa). Basic and acidic residues predominate over residues 199 to 214; that stretch reads SAQHSDGESDFERDAG. C2H2-type zinc fingers lie at residues 253–275, 281–303, 309–331, 337–359, 365–387, 393–415, 421–443, 449–471, 477–499, 505–527, 533–555, 561–583, 589–611, and 617–639; these read YECP…ERTH, YKCD…QTTH, YKCR…QRIH, FQCA…QRTH, YSCP…QGIH, YECK…QRIH, YKCT…RRTH, YQCS…RRTH, YKCG…QGMH, YECL…QRIH, YKCS…QQTH, YKCL…QRAH, YRCP…QRIH, and YKCP…QRTH.

The protein belongs to the krueppel C2H2-type zinc-finger protein family.

The protein resides in the nucleus. In terms of biological role, may be involved in transcriptional regulation during the post-meiotic stages of spermatogenesis. The sequence is that of Zinc finger and SCAN domain-containing protein 2 (ZSCAN2) from Pongo abelii (Sumatran orangutan).